A 200-amino-acid chain; its full sequence is Small ribosomal subunit protein uS4 (200 aa).

Positions 22 to 42 (TGKELEKRPYAPGPHGPGQRK) are disordered. In terms of domain architecture, S4 RNA-binding spans 92–155 (ARLDNVVYKL…RNLSIIKESV (64 aa)).

Belongs to the universal ribosomal protein uS4 family. In terms of assembly, part of the 30S ribosomal subunit. Contacts protein S5. The interaction surface between S4 and S5 is involved in control of translational fidelity.

One of the primary rRNA binding proteins, it binds directly to 16S rRNA where it nucleates assembly of the body of the 30S subunit. Functionally, with S5 and S12 plays an important role in translational accuracy. This chain is Small ribosomal subunit protein uS4, found in Bacillus velezensis (strain DSM 23117 / BGSC 10A6 / LMG 26770 / FZB42) (Bacillus amyloliquefaciens subsp. plantarum).